The chain runs to 301 residues: ATP synthase gamma chain (301 aa).

The protein belongs to the ATPase gamma chain family. In terms of assembly, F-type ATPases have 2 components, CF(1) - the catalytic core - and CF(0) - the membrane proton channel. CF(1) has five subunits: alpha(3), beta(3), gamma(1), delta(1), epsilon(1). CF(0) has three main subunits: a, b and c.

The protein resides in the cell inner membrane. Functionally, produces ATP from ADP in the presence of a proton gradient across the membrane. The gamma chain is believed to be important in regulating ATPase activity and the flow of protons through the CF(0) complex. The polypeptide is ATP synthase gamma chain (Helicobacter pylori (strain P12)).